The following is a 481-amino-acid chain: UDP-glycosyltransferase 85C2 (481 aa).

The Proton acceptor role is filled by histidine 23. Histidine 23 lines the an anthocyanidin pocket. The active-site Charge relay is aspartate 120. Residues threonine 143, glutamine 362, histidine 377, tryptophan 380, serine 382, glutamate 385, aspartate 401, and glutamine 402 each contribute to the UDP-alpha-D-glucose site.

Belongs to the UDP-glycosyltransferase family.

It catalyses the reaction steviol + UDP-alpha-D-glucose = steviolmonoside + UDP + H(+). The enzyme catalyses steviolmonoside + UDP-alpha-D-glucose = rubusoside + UDP. Functionally, involved in the biosynthesis of steviol glycosides in leaves. Converts steviol to the mono-glycoside steviolmonoside. Converts the mono-glycoside steviolmonoside to the bi-glycoside rubusoside. The sequence is that of UDP-glycosyltransferase 85C2 from Stevia rebaudiana (Stevia).